We begin with the raw amino-acid sequence, 264 residues long: S-adenosylmethionine decarboxylase proenzyme (264 aa).

The Schiff-base intermediate with substrate; via pyruvic acid role is filled by S112. S112 is modified (pyruvic acid (Ser); by autocatalysis). H117 (proton acceptor; for processing activity) is an active-site residue. The active-site Proton donor; for catalytic activity is C140.

It belongs to the prokaryotic AdoMetDC family. Type 2 subfamily. In terms of assembly, heterooctamer of four alpha and four beta chains arranged as a tetramer of alpha/beta heterodimers. Pyruvate serves as cofactor. Is synthesized initially as an inactive proenzyme. Formation of the active enzyme involves a self-maturation process in which the active site pyruvoyl group is generated from an internal serine residue via an autocatalytic post-translational modification. Two non-identical subunits are generated from the proenzyme in this reaction, and the pyruvate is formed at the N-terminus of the alpha chain, which is derived from the carboxyl end of the proenzyme. The post-translation cleavage follows an unusual pathway, termed non-hydrolytic serinolysis, in which the side chain hydroxyl group of the serine supplies its oxygen atom to form the C-terminus of the beta chain, while the remainder of the serine residue undergoes an oxidative deamination to produce ammonia and the pyruvoyl group blocking the N-terminus of the alpha chain.

It carries out the reaction S-adenosyl-L-methionine + H(+) = S-adenosyl 3-(methylsulfanyl)propylamine + CO2. It functions in the pathway amine and polyamine biosynthesis; S-adenosylmethioninamine biosynthesis; S-adenosylmethioninamine from S-adenosyl-L-methionine: step 1/1. Its function is as follows. Catalyzes the decarboxylation of S-adenosylmethionine to S-adenosylmethioninamine (dcAdoMet), the propylamine donor required for the synthesis of the polyamines spermine and spermidine from the diamine putrescine. This chain is S-adenosylmethionine decarboxylase proenzyme, found in Citrobacter koseri (strain ATCC BAA-895 / CDC 4225-83 / SGSC4696).